The chain runs to 227 residues: 2-C-methyl-D-erythritol 4-phosphate cytidylyltransferase (227 aa).

Belongs to the IspD/TarI cytidylyltransferase family. IspD subfamily.

The enzyme catalyses 2-C-methyl-D-erythritol 4-phosphate + CTP + H(+) = 4-CDP-2-C-methyl-D-erythritol + diphosphate. It functions in the pathway isoprenoid biosynthesis; isopentenyl diphosphate biosynthesis via DXP pathway; isopentenyl diphosphate from 1-deoxy-D-xylulose 5-phosphate: step 2/6. Functionally, catalyzes the formation of 4-diphosphocytidyl-2-C-methyl-D-erythritol from CTP and 2-C-methyl-D-erythritol 4-phosphate (MEP). The polypeptide is 2-C-methyl-D-erythritol 4-phosphate cytidylyltransferase (Petrotoga mobilis (strain DSM 10674 / SJ95)).